Reading from the N-terminus, the 178-residue chain is Matrix-remodeling-associated protein 7 (178 aa).

A helical membrane pass occupies residues 7–27; that stretch reads LLAALPALVTALALLLAWLLL. Residues 33–121 form a disordered region; that stretch reads RVPAPESTAS…AFSFKYSPGQ (89 aa). The span at 48-65 shows a compositional bias: pro residues; sequence APAPPEPPESCAPEPAPE. Residues 76–85 are compositionally biased toward acidic residues; sequence PEESEAEEPA. Residues Ser79 and Ser165 each carry the phosphoserine modification.

It localises to the membrane. The protein is Matrix-remodeling-associated protein 7 (Mxra7) of Mus musculus (Mouse).